The following is a 239-amino-acid chain: Putative ABC transporter ATP-binding protein AlbC (239 aa).

The ABC transporter domain occupies Leu-4–His-238. Residue Gly-37–Thr-44 participates in ATP binding.

Belongs to the ABC transporter superfamily.

Involved in the production of the bacteriocin subtilosin. Required for immunity to subtilosin. The chain is Putative ABC transporter ATP-binding protein AlbC (albC) from Bacillus subtilis (strain 168).